Here is a 232-residue protein sequence, read N- to C-terminus: 7-cyano-7-deazaguanine synthase (232 aa).

8 to 18 (FSGGQDSTTCL) contributes to the ATP binding site. Zn(2+) is bound by residues Cys-189, Cys-198, Cys-201, and Cys-204.

Belongs to the QueC family. Zn(2+) is required as a cofactor.

The enzyme catalyses 7-carboxy-7-deazaguanine + NH4(+) + ATP = 7-cyano-7-deazaguanine + ADP + phosphate + H2O + H(+). Its pathway is purine metabolism; 7-cyano-7-deazaguanine biosynthesis. Its function is as follows. Catalyzes the ATP-dependent conversion of 7-carboxy-7-deazaguanine (CDG) to 7-cyano-7-deazaguanine (preQ(0)). This is 7-cyano-7-deazaguanine synthase from Yersinia enterocolitica serotype O:8 / biotype 1B (strain NCTC 13174 / 8081).